The following is a 291-amino-acid chain: tRNA dimethylallyltransferase (291 aa).

9 to 16 (GPTASGKT) provides a ligand contact to ATP. Residue 11-16 (TASGKT) participates in substrate binding. Residues 34–37 (DSLQ) form an interaction with substrate tRNA region.

This sequence belongs to the IPP transferase family. Monomer. Mg(2+) is required as a cofactor.

It carries out the reaction adenosine(37) in tRNA + dimethylallyl diphosphate = N(6)-dimethylallyladenosine(37) in tRNA + diphosphate. Catalyzes the transfer of a dimethylallyl group onto the adenine at position 37 in tRNAs that read codons beginning with uridine, leading to the formation of N6-(dimethylallyl)adenosine (i(6)A). This Aster yellows witches'-broom phytoplasma (strain AYWB) protein is tRNA dimethylallyltransferase.